The primary structure comprises 258 residues: C4b-binding protein beta chain (258 aa).

Residues 1-15 (MLCLVVCCLIWLISA) form the signal peptide. Residues 18–75 (GSCSEPPPVNNSVFVGKETEEQILGIYLCIKGYHLVGKKSLVFDPSKEWNSTLPECLL) form the Sushi 1; atypical; lacks a Cys domain. N-linked (GlcNAc...) asparagine glycosylation is found at N27, N67, N89, N95, and N114. 5 disulfide bridges follow: C46–C73, C78–C118, C104–C131, C136–C176, and C162–C188. 2 Sushi domains span residues 76–133 (GHCP…ICRS) and 134–190 (RDCE…TCES). N-linked (GlcNAc...) asparagine glycosylation occurs at N218.

Disulfide-linked complex of alpha and beta chains.

The protein localises to the secreted. Controls the classical pathway of complement activation. It binds as a cofactor to C3b/C4b inactivator (C3bINA), which then hydrolyzes the complement fragment C4b. It also accelerates the degradation of the C4bC2a complex (C3 convertase) by dissociating the complement fragment C2a. It also interacts with anticoagulant protein S and with serum amyloid P component. The polypeptide is C4b-binding protein beta chain (C4bpb) (Rattus norvegicus (Rat)).